Here is a 139-residue protein sequence, read N- to C-terminus: Small ribosomal subunit protein bS16 (139 aa).

A disordered region spans residues 85-108 (ESKSGKKPAKKATTKEASAKKPTD). Over residues 97–108 (TTKEASAKKPTD) the composition is skewed to basic and acidic residues.

Belongs to the bacterial ribosomal protein bS16 family.

This Leuconostoc mesenteroides subsp. mesenteroides (strain ATCC 8293 / DSM 20343 / BCRC 11652 / CCM 1803 / JCM 6124 / NCDO 523 / NBRC 100496 / NCIMB 8023 / NCTC 12954 / NRRL B-1118 / 37Y) protein is Small ribosomal subunit protein bS16.